A 342-amino-acid polypeptide reads, in one-letter code: uncharacterized protein (342 aa).

This sequence belongs to the cycloisomerase 2 family.

This is an uncharacterized protein from Staphylococcus aureus (strain bovine RF122 / ET3-1).